The sequence spans 104 residues: Large ribosomal subunit protein bL21 (104 aa).

Belongs to the bacterial ribosomal protein bL21 family. Part of the 50S ribosomal subunit. Contacts protein L20.

Its function is as follows. This protein binds to 23S rRNA in the presence of protein L20. This chain is Large ribosomal subunit protein bL21, found in Pseudomonas putida (strain GB-1).